The chain runs to 389 residues: 26S proteasome regulatory subunit 6B homolog (389 aa).

175–182 (GPPGTGKT) contributes to the ATP binding site.

Belongs to the AAA ATPase family.

The protein localises to the cytoplasm. Its subcellular location is the nucleus. Functionally, the 26S proteasome is involved in the ATP-dependent degradation of ubiquitinated proteins. The regulatory (or ATPase) complex confers ATP dependency and substrate specificity to the 26S complex. The polypeptide is 26S proteasome regulatory subunit 6B homolog (rpt3) (Schizosaccharomyces pombe (strain 972 / ATCC 24843) (Fission yeast)).